The primary structure comprises 1134 residues: MMS19 nucleotide excision repair protein homolog (1134 aa).

HEAT repeat units follow at residues 959 to 998, 1002 to 1047, 1050 to 1089, and 1092 to 1130; these read QRCFSTIVPILESLIMNSQTSLSRTMLHVALAHVISNVPV, LDNT…KGQQ, SDNAHIIIECLIKLTSYPHLMVVRETSIQCLVALLELPHR, and YPFRREVLQAIEKSLDDPKRKVREEAIRCRQAWASITSG.

It belongs to the MET18/MMS19 family. In terms of assembly, part of a complex composed of AE7, CIA1, MMS19 and NAR1. Interacts with AE7.

It is found in the nucleus. The protein resides in the cytoplasm. In terms of biological role, may select specific target apoproteins to which a Fe-S cluster produced by the cytosolic iron-sulfur (Fe-S) protein assembly (CIA) pathway is transferred. The protein is MMS19 nucleotide excision repair protein homolog of Arabidopsis thaliana (Mouse-ear cress).